Reading from the N-terminus, the 221-residue chain is MVAFTSLLAGFAAIAGVLSAPTESSVEVEKRQTIGPGTGYSNGYYYSYWNDGHAGVTYTNGGGGSFTVNWSNSGNFVGGKGWQPGTKNKVINFSGSYNPNGNSYLSIYGWSRNPLIEYYIVENFGTYNPSTGATKLGEVTSDGSVYDIYRTQRVNQPSIIGTATFYQYWSVRRNHRSSGSVNTANHFNAWASHGLTLGTMDYQIVAVEGYFSSGSASITVS.

The N-terminal stretch at 1–19 (MVAFTSLLAGFAAIAGVLS) is a signal peptide. Residues 32 to 221 (QTIGPGTGYS…SSGSASITVS (190 aa)) enclose the GH11 domain. N-linked (GlcNAc...) asparagine glycans are attached at residues asparagine 69 and asparagine 92. The Nucleophile role is filled by glutamate 117. Glutamate 208 functions as the Proton donor in the catalytic mechanism.

This sequence belongs to the glycosyl hydrolase 11 (cellulase G) family.

It is found in the secreted. It carries out the reaction Endohydrolysis of (1-&gt;4)-beta-D-xylosidic linkages in xylans.. It participates in glycan degradation; xylan degradation. In terms of biological role, endo-1,4-beta-xylanase involved in the hydrolysis of xylan, a major structural heterogeneous polysaccharide found in plant biomass representing the second most abundant polysaccharide in the biosphere, after cellulose. The protein is Endo-1,4-beta-xylanase 2 (Xyn2) of Trichoderma harzianum (Hypocrea lixii).